The primary structure comprises 46 residues: Escargot/snail protein homolog (46 aa).

C2H2-type zinc fingers lie at residues 1 to 4, 9 to 30, and 36 to 46; these read HIAH, CKCP…IRTH, and SVCQHCNRAFA.

It belongs to the snail C2H2-type zinc-finger protein family.

The protein localises to the nucleus. In Lithobius forficatus (Centipede), this protein is Escargot/snail protein homolog.